The chain runs to 583 residues: Glycine--tRNA ligase (583 aa).

Substrate-binding residues include Arg100 and Glu166. ATP is bound by residues 198-200 (RNE), 208-213 (VRLREF), 328-329 (EV), and 443-446 (GTDR). Position 213-217 (213-217 (FTIME)) interacts with substrate. 439-443 (EPSFG) is a substrate binding site.

This sequence belongs to the class-II aminoacyl-tRNA synthetase family.

The protein localises to the cytoplasm. It catalyses the reaction tRNA(Gly) + glycine + ATP = glycyl-tRNA(Gly) + AMP + diphosphate. In terms of biological role, catalyzes the attachment of glycine to tRNA(Gly). The sequence is that of Glycine--tRNA ligase from Aeropyrum pernix (strain ATCC 700893 / DSM 11879 / JCM 9820 / NBRC 100138 / K1).